Here is a 64-residue protein sequence, read N- to C-terminus: LGVLLTICLLLFPLTAVPLDGDQPADQPAGRMQDDISSEQHPFFDPVKRCCVVCNAGCSGNCCP.

The signal sequence occupies residues 1–16 (LGVLLTICLLLFPLTA). The propeptide occupies 17–49 (VPLDGDQPADQPAGRMQDDISSEQHPFFDPVKR). Intrachain disulfides connect Cys50–Cys63, Cys51–Cys58, and Cys54–Cys62.

Belongs to the conotoxin M superfamily. As to expression, expressed by the venom duct.

It is found in the secreted. This chain is Conotoxin Pu3.5, found in Conus pulicarius (Flea-bitten cone).